The following is a 435-amino-acid chain: Glutamyl-tRNA reductase (435 aa).

Residues 49 to 52, Ser-109, 114 to 116, and Gln-120 contribute to the substrate site; these read TCNR and EGQ. The active-site Nucleophile is the Cys-50. 198–203 contacts NADP(+); it reads GAGRMS.

This sequence belongs to the glutamyl-tRNA reductase family. In terms of assembly, homodimer.

It carries out the reaction (S)-4-amino-5-oxopentanoate + tRNA(Glu) + NADP(+) = L-glutamyl-tRNA(Glu) + NADPH + H(+). It participates in porphyrin-containing compound metabolism; protoporphyrin-IX biosynthesis; 5-aminolevulinate from L-glutamyl-tRNA(Glu): step 1/2. The protein operates within porphyrin-containing compound metabolism; chlorophyll biosynthesis. Functionally, catalyzes the NADPH-dependent reduction of glutamyl-tRNA(Glu) to glutamate 1-semialdehyde (GSA). In Prochlorococcus marinus (strain MIT 9211), this protein is Glutamyl-tRNA reductase.